We begin with the raw amino-acid sequence, 51 residues long: MARNKPLGKKLRLAAAFKXNRNPPVWVVVKTKRRVTRSPARRHWRRVKLKA.

It belongs to the eukaryotic ribosomal protein eL39 family.

In Pyrobaculum aerophilum (strain ATCC 51768 / DSM 7523 / JCM 9630 / CIP 104966 / NBRC 100827 / IM2), this protein is Large ribosomal subunit protein eL39 (rpl39e).